A 205-amino-acid chain; its full sequence is MSKASFLREYKIVIVGGGGVGKSALTIQFIQSHFVDEYDPTIEDSYRKQCVIDDETALLDVLDTAGQEEYSAMREQYMRNGEGFVLVYSITSRLSFEEVNTFYQQIRRVKDRDSFPMVLVGNKCDLEGDRQVSSQEGRDLAKSFGCPFSETSAKQRIRVDDTFYEVVREIRRMNKEQEGRSKGGQREAFEMSDTRNDGCCGCILM.

16–23 contacts GTP; the sequence is GGGGVGKS. Positions 38-46 match the Effector region motif; the sequence is YDPTIEDSY. GTP contacts are provided by residues 63–67 and 122–125; these read DTAGQ and NKCD. Cys202 is modified (cysteine methyl ester). Cys202 carries the S-farnesyl cysteine lipid modification. The propeptide at 203–205 is removed in mature form; it reads ILM.

The protein belongs to the small GTPase superfamily. Ras family.

The protein localises to the cell membrane. It catalyses the reaction GTP + H2O = GDP + phosphate + H(+). Its activity is regulated as follows. Alternates between an inactive form bound to GDP and an active form bound to GTP. Activated by a guanine nucleotide-exchange factor (GEF) and inactivated by a GTPase-activating protein (GAP). This Mucor circinelloides f. lusitanicus (Mucor racemosus var. lusitanicus) protein is Ras-like protein 3 (RAS3).